The chain runs to 571 residues: Potassium-transporting ATPase potassium-binding subunit (571 aa).

12 helical membrane passes run 5 to 25 (GWMQ…PLGG), 64 to 84 (LAYA…LYAL), 136 to 156 (GLTH…VALI), 179 to 199 (LYVL…QGMP), 220 to 240 (VGPV…GGFF), 254 to 274 (LSNF…TNVF), 285 to 305 (WAIL…TYWA), 330 to 350 (FGIA…CGAV), 375 to 395 (IIGG…VAIF), 421 to 441 (MLGI…ATVV), 488 to 508 (LAIG…AIAG), and 527 to 547 (GGLF…LTFF).

Belongs to the KdpA family. As to quaternary structure, the system is composed of three essential subunits: KdpA, KdpB and KdpC.

The protein localises to the cell inner membrane. Functionally, part of the high-affinity ATP-driven potassium transport (or Kdp) system, which catalyzes the hydrolysis of ATP coupled with the electrogenic transport of potassium into the cytoplasm. This subunit binds the periplasmic potassium ions and delivers the ions to the membrane domain of KdpB through an intramembrane tunnel. This is Potassium-transporting ATPase potassium-binding subunit from Methylorubrum extorquens (strain CM4 / NCIMB 13688) (Methylobacterium extorquens).